The chain runs to 377 residues: Short chain dehydrogenase gsfE (377 aa).

Positions 89, 121, 226, 266, and 268 each coordinate NADP(+). The active-site Proton donor is Tyr226.

Belongs to the short-chain dehydrogenases/reductases (SDR) family. Highly divergent.

The enzyme catalyses dehydrogriseofulvin + NADPH + H(+) = griseofulvin + NADP(+). It functions in the pathway secondary metabolite biosynthesis; terpenoid biosynthesis. In terms of biological role, short chain dehydrogenase; part of the gene cluster that mediates the biosynthesis of griseofulvin, an important antifungal drug that has been in use for a long time for treating dermatophyte infections. The first step of the pathway is the formation of the heptaketide backbone by gsfA which is initiated by priming with acetyl-CoA, followed by sequential condensations of 6 malonyl-CoA units. The resulting benzophenone can undergo a spontaneous dehydration to form norlichexanthone. However, the true precursor for the griseofulvin biosynthesis is not norlichexanthone, but the heptaketide benzophenone that is O-methylated at 3-OH by gsfB to produce griseophenone D which is further methylated at 9-OH by gsfC to yield griseophenone C. Griseophenone C is then substrate of halogenase gsfI which is responsible for the regio-specific chlorination at the C13 position to form griseophenone B. The cytochrome P450 gsfF catalyzes the coupling of orcinol and phloroglucinol rings in griseophenone B to form desmethyl-dehydrogriseofulvin A which is further methylated at 5-OH by gsfD to yield dehydrogriseofulvin. Finally, gsfE performs stereospecific reduction of enone 18 of dehydrogriseofulvin to afford the final product griseofulvin. The sequence is that of Short chain dehydrogenase gsfE from Penicillium aethiopicum.